The following is a 287-amino-acid chain: Pyridoxal kinase PdxY (287 aa).

Substrate is bound by residues S10 and 45-46 (TQ). ATP contacts are provided by residues D112, A144, E149, K182, and 209–212 (RPLV). D224 is a substrate binding site.

The protein belongs to the pyridoxine kinase family. PdxY subfamily. Homodimer. Requires Mg(2+) as cofactor.

The enzyme catalyses pyridoxal + ATP = pyridoxal 5'-phosphate + ADP + H(+). It functions in the pathway cofactor metabolism; pyridoxal 5'-phosphate salvage; pyridoxal 5'-phosphate from pyridoxal: step 1/1. In terms of biological role, pyridoxal kinase involved in the salvage pathway of pyridoxal 5'-phosphate (PLP). Catalyzes the phosphorylation of pyridoxal to PLP. The polypeptide is Pyridoxal kinase PdxY (Escherichia coli O6:H1 (strain CFT073 / ATCC 700928 / UPEC)).